We begin with the raw amino-acid sequence, 77 residues long: Acyl carrier protein (77 aa).

One can recognise a Carrier domain in the interval 2–77 (STIEERVKKI…EAIDYVVSHQ (76 aa)). The residue at position 37 (serine 37) is an O-(pantetheine 4'-phosphoryl)serine.

Belongs to the acyl carrier protein (ACP) family. 4'-phosphopantetheine is transferred from CoA to a specific serine of apo-ACP by AcpS. This modification is essential for activity because fatty acids are bound in thioester linkage to the sulfhydryl of the prosthetic group.

The protein resides in the cytoplasm. The protein operates within lipid metabolism; fatty acid biosynthesis. In terms of biological role, carrier of the growing fatty acid chain in fatty acid biosynthesis. This is Acyl carrier protein from Oceanospirillum linum.